We begin with the raw amino-acid sequence, 43 residues long: Seed non-specific lipid transfer protein-like (43 aa).

Belongs to the plant LTP family. As to quaternary structure, homodimer.

Plant non-specific lipid-transfer proteins transfer phospholipids as well as galactolipids across membranes. May play a role in wax or cutin deposition in the cell walls of expanding epidermal cells and certain secretory tissues. This isoform inhibits the hyphal growth of several fungi in vitro. The protein is Seed non-specific lipid transfer protein-like of Raphanus sativus (Radish).